The following is a 188-amino-acid chain: Elongation factor P (188 aa).

The protein belongs to the elongation factor P family.

The protein resides in the cytoplasm. It participates in protein biosynthesis; polypeptide chain elongation. Functionally, involved in peptide bond synthesis. Stimulates efficient translation and peptide-bond synthesis on native or reconstituted 70S ribosomes in vitro. Probably functions indirectly by altering the affinity of the ribosome for aminoacyl-tRNA, thus increasing their reactivity as acceptors for peptidyl transferase. This is Elongation factor P from Rickettsia africae (strain ESF-5).